We begin with the raw amino-acid sequence, 239 residues long: tRNA (guanine-N(7)-)-methyltransferase (239 aa).

S-adenosyl-L-methionine-binding residues include Glu69, Glu94, Asp121, and Asp144. Residue Asp144 is part of the active site. Substrate is bound at residue Lys148. An interaction with RNA region spans residues 150–155 (RHNKRR). Residues Asp180 and 217-220 (TKFE) each bind substrate.

This sequence belongs to the class I-like SAM-binding methyltransferase superfamily. TrmB family. As to quaternary structure, monomer.

It carries out the reaction guanosine(46) in tRNA + S-adenosyl-L-methionine = N(7)-methylguanosine(46) in tRNA + S-adenosyl-L-homocysteine. It functions in the pathway tRNA modification; N(7)-methylguanine-tRNA biosynthesis. Catalyzes the formation of N(7)-methylguanine at position 46 (m7G46) in tRNA. This is tRNA (guanine-N(7)-)-methyltransferase from Photorhabdus laumondii subsp. laumondii (strain DSM 15139 / CIP 105565 / TT01) (Photorhabdus luminescens subsp. laumondii).